A 210-amino-acid chain; its full sequence is MIEIEIRDINNNIVGKKEVPDIVFNNSASESVVHTAVVAYMANQRQGTHCTKTRSEVSGGGKKPWRQKHTGRARHGSIRSPLWRKGGIVFGPKPRDYYIQLPKQMKDTALFKALTMKYRDNEILLLDNLSLNRIKTKDMVEILKNLQLEESSVLIALPEKDEKVLLSARNIPYIGVVRAEDLNAYHVAMFDKVVFTVAGLDKLLSIKGVS.

Positions H49–G76 are disordered. Residues K63 to G76 show a composition bias toward basic residues.

It belongs to the universal ribosomal protein uL4 family. Part of the 50S ribosomal subunit.

In terms of biological role, one of the primary rRNA binding proteins, this protein initially binds near the 5'-end of the 23S rRNA. It is important during the early stages of 50S assembly. It makes multiple contacts with different domains of the 23S rRNA in the assembled 50S subunit and ribosome. Forms part of the polypeptide exit tunnel. The polypeptide is Large ribosomal subunit protein uL4 (Thermodesulfovibrio yellowstonii (strain ATCC 51303 / DSM 11347 / YP87)).